A 133-amino-acid polypeptide reads, in one-letter code: ATP synthase epsilon chain, chloroplastic (133 aa).

Belongs to the ATPase epsilon chain family. F-type ATPases have 2 components, CF(1) - the catalytic core - and CF(0) - the membrane proton channel. CF(1) has five subunits: alpha(3), beta(3), gamma(1), delta(1), epsilon(1). CF(0) has three main subunits: a, b and c.

The protein resides in the plastid. It localises to the chloroplast thylakoid membrane. Its function is as follows. Produces ATP from ADP in the presence of a proton gradient across the membrane. This chain is ATP synthase epsilon chain, chloroplastic, found in Atropa belladonna (Belladonna).